Consider the following 56-residue polypeptide: Large ribosomal subunit protein bL32 (56 aa).

The interval 1–21 is disordered; it reads MGVPQRRQSHARKNKRRSEWR. Basic residues predominate over residues 7–19; it reads RQSHARKNKRRSE.

It belongs to the bacterial ribosomal protein bL32 family.

The sequence is that of Large ribosomal subunit protein bL32 from Syntrophomonas wolfei subsp. wolfei (strain DSM 2245B / Goettingen).